The chain runs to 547 residues: Type I inositol polyphosphate 5-phosphatase 4 (547 aa).

Basic and acidic residues predominate over residues 56–67; sequence CSVRKSKTETRS. Residues 56–80 are disordered; the sequence is CSVRKSKTETRSKRNSGRARRNKLD. Catalytic stretches follow at residues 387-402 and 467-482; these read DRVI…IALS and KRRT…WHGS.

The protein belongs to the inositol polyphosphate 5-phosphatase family.

The chain is Type I inositol polyphosphate 5-phosphatase 4 from Arabidopsis thaliana (Mouse-ear cress).